The sequence spans 345 residues: N-acetyl-gamma-glutamyl-phosphate reductase (345 aa).

Cys-149 is an active-site residue.

Belongs to the NAGSA dehydrogenase family. Type 1 subfamily.

The protein localises to the cytoplasm. It carries out the reaction N-acetyl-L-glutamate 5-semialdehyde + phosphate + NADP(+) = N-acetyl-L-glutamyl 5-phosphate + NADPH + H(+). The protein operates within amino-acid biosynthesis; L-arginine biosynthesis; N(2)-acetyl-L-ornithine from L-glutamate: step 3/4. Its function is as follows. Catalyzes the NADPH-dependent reduction of N-acetyl-5-glutamyl phosphate to yield N-acetyl-L-glutamate 5-semialdehyde. The chain is N-acetyl-gamma-glutamyl-phosphate reductase from Geobacillus sp. (strain WCH70).